The primary structure comprises 188 residues: Putative manganese efflux pump MntP (188 aa).

Transmembrane regions (helical) follow at residues 1 to 21, 40 to 60, 64 to 84, 105 to 127, 131 to 153, and 166 to 186; these read MLIQILLIGVSVSMDTFAVSI, LWFGGFQALFPLLGYFAASTF, VTAVDHWIIFGLLALIGGNMV, HMLPLAVACSIDAVAVGVSFAFM, IWLSVVIIGITTGLFSAAGLYIG, and IAGGVVLILIGLKVLFEHLGF.

It belongs to the MntP (TC 9.B.29) family.

The protein localises to the cell membrane. Its function is as follows. Probably functions as a manganese efflux pump. In Bifidobacterium adolescentis (strain ATCC 15703 / DSM 20083 / NCTC 11814 / E194a), this protein is Putative manganese efflux pump MntP.